A 565-amino-acid chain; its full sequence is Proline--tRNA ligase (565 aa).

This sequence belongs to the class-II aminoacyl-tRNA synthetase family. ProS type 1 subfamily. As to quaternary structure, homodimer.

The protein localises to the cytoplasm. The catalysed reaction is tRNA(Pro) + L-proline + ATP = L-prolyl-tRNA(Pro) + AMP + diphosphate. In terms of biological role, catalyzes the attachment of proline to tRNA(Pro) in a two-step reaction: proline is first activated by ATP to form Pro-AMP and then transferred to the acceptor end of tRNA(Pro). As ProRS can inadvertently accommodate and process non-cognate amino acids such as alanine and cysteine, to avoid such errors it has two additional distinct editing activities against alanine. One activity is designated as 'pretransfer' editing and involves the tRNA(Pro)-independent hydrolysis of activated Ala-AMP. The other activity is designated 'posttransfer' editing and involves deacylation of mischarged Ala-tRNA(Pro). The misacylated Cys-tRNA(Pro) is not edited by ProRS. This is Proline--tRNA ligase from Lactobacillus gasseri (strain ATCC 33323 / DSM 20243 / BCRC 14619 / CIP 102991 / JCM 1131 / KCTC 3163 / NCIMB 11718 / NCTC 13722 / AM63).